We begin with the raw amino-acid sequence, 160 residues long: Protein-export protein SecB (160 aa).

The protein belongs to the SecB family. In terms of assembly, homotetramer, a dimer of dimers. One homotetramer interacts with 1 SecA dimer.

The protein localises to the cytoplasm. In terms of biological role, one of the proteins required for the normal export of preproteins out of the cell cytoplasm. It is a molecular chaperone that binds to a subset of precursor proteins, maintaining them in a translocation-competent state. It also specifically binds to its receptor SecA. The sequence is that of Protein-export protein SecB from Azorhizobium caulinodans (strain ATCC 43989 / DSM 5975 / JCM 20966 / LMG 6465 / NBRC 14845 / NCIMB 13405 / ORS 571).